The chain runs to 127 residues: Large ribosomal subunit protein bL12 (127 aa).

Belongs to the bacterial ribosomal protein bL12 family. Homodimer. Part of the ribosomal stalk of the 50S ribosomal subunit. Forms a multimeric L10(L12)X complex, where L10 forms an elongated spine to which 2 to 4 L12 dimers bind in a sequential fashion. Binds GTP-bound translation factors.

Its function is as follows. Forms part of the ribosomal stalk which helps the ribosome interact with GTP-bound translation factors. Is thus essential for accurate translation. The protein is Large ribosomal subunit protein bL12 of Streptococcus thermophilus (strain CNRZ 1066).